The primary structure comprises 189 residues: MSAIVIAIVVLTILALVFGVLLGFAAEKFKVEGNPLTDQIEALLPQTQCGQCGYPGCRPYAEAIANGDKVNKCPPGGAATMEKLADLMGVEPEPLNVTEAVQIKKVAYIREDECIGCTKCIQACPVDAILGSGKLMHTVITDYCTGCDLCVAPCPVDCIDMLPVEQTTKTWNWQLNAIPVKQLQEDKPC.

Residues 1–26 are hydrophobic; that stretch reads MSAIVIAIVVLTILALVFGVLLGFAA. The 59-residue stretch at 32-90 folds into the 4Fe-4S domain; sequence EGNPLTDQIEALLPQTQCGQCGYPGCRPYAEAIANGDKVNKCPPGGAATMEKLADLMGV. [4Fe-4S] cluster-binding residues include Cys-49, Cys-52, Cys-57, Cys-73, Cys-114, Cys-117, Cys-120, Cys-124, Cys-144, Cys-147, Cys-150, and Cys-154. 4Fe-4S ferredoxin-type domains lie at 105–134 and 135–164; these read KVAYIREDECIGCTKCIQACPVDAILGSGK and LMHTVITDYCTGCDLCVAPCPVDCIDMLPV.

It belongs to the 4Fe4S bacterial-type ferredoxin family. RnfB subfamily. The complex is composed of six subunits: RnfA, RnfB, RnfC, RnfD, RnfE and RnfG. [4Fe-4S] cluster is required as a cofactor.

Its subcellular location is the cell inner membrane. In terms of biological role, part of a membrane-bound complex that couples electron transfer with translocation of ions across the membrane. This chain is Ion-translocating oxidoreductase complex subunit B, found in Shewanella pealeana (strain ATCC 700345 / ANG-SQ1).